Consider the following 196-residue polypeptide: Probable nicotinate-nucleotide adenylyltransferase (196 aa).

It belongs to the NadD family.

The enzyme catalyses nicotinate beta-D-ribonucleotide + ATP + H(+) = deamido-NAD(+) + diphosphate. The protein operates within cofactor biosynthesis; NAD(+) biosynthesis; deamido-NAD(+) from nicotinate D-ribonucleotide: step 1/1. Catalyzes the reversible adenylation of nicotinate mononucleotide (NaMN) to nicotinic acid adenine dinucleotide (NaAD). The protein is Probable nicotinate-nucleotide adenylyltransferase of Caldicellulosiruptor saccharolyticus (strain ATCC 43494 / DSM 8903 / Tp8T 6331).